The chain runs to 206 residues: FMN-dependent NADH:quinone oxidoreductase 2 (206 aa).

FMN contacts are provided by residues Ser-10, 16–18, and 140–143; these read SYS and SCGG.

The protein belongs to the azoreductase type 1 family. As to quaternary structure, homodimer. FMN serves as cofactor.

The enzyme catalyses 2 a quinone + NADH + H(+) = 2 a 1,4-benzosemiquinone + NAD(+). It catalyses the reaction N,N-dimethyl-1,4-phenylenediamine + anthranilate + 2 NAD(+) = 2-(4-dimethylaminophenyl)diazenylbenzoate + 2 NADH + 2 H(+). Quinone reductase that provides resistance to thiol-specific stress caused by electrophilic quinones. Functionally, also exhibits azoreductase activity. Catalyzes the reductive cleavage of the azo bond in aromatic azo compounds to the corresponding amines. This chain is FMN-dependent NADH:quinone oxidoreductase 2, found in Cupriavidus pinatubonensis (strain JMP 134 / LMG 1197) (Cupriavidus necator (strain JMP 134)).